The primary structure comprises 433 residues: ATP-dependent protease ATPase subunit HslU (433 aa).

ATP-binding positions include valine 18, 60-65, aspartate 246, glutamate 311, and arginine 383; that span reads GVGKTE.

This sequence belongs to the ClpX chaperone family. HslU subfamily. In terms of assembly, a double ring-shaped homohexamer of HslV is capped on each side by a ring-shaped HslU homohexamer. The assembly of the HslU/HslV complex is dependent on binding of ATP.

The protein resides in the cytoplasm. Functionally, ATPase subunit of a proteasome-like degradation complex; this subunit has chaperone activity. The binding of ATP and its subsequent hydrolysis by HslU are essential for unfolding of protein substrates subsequently hydrolyzed by HslV. HslU recognizes the N-terminal part of its protein substrates and unfolds these before they are guided to HslV for hydrolysis. This Rhodopseudomonas palustris (strain BisA53) protein is ATP-dependent protease ATPase subunit HslU.